The following is a 285-amino-acid chain: UDP-3-O-acyl-N-acetylglucosamine deacetylase (285 aa).

His-89, His-243, and Asp-247 together coordinate Zn(2+). Residue His-270 is the Proton donor of the active site.

The protein belongs to the LpxC family. Zn(2+) is required as a cofactor.

The catalysed reaction is a UDP-3-O-[(3R)-3-hydroxyacyl]-N-acetyl-alpha-D-glucosamine + H2O = a UDP-3-O-[(3R)-3-hydroxyacyl]-alpha-D-glucosamine + acetate. The protein operates within glycolipid biosynthesis; lipid IV(A) biosynthesis; lipid IV(A) from (3R)-3-hydroxytetradecanoyl-[acyl-carrier-protein] and UDP-N-acetyl-alpha-D-glucosamine: step 2/6. Its function is as follows. Catalyzes the hydrolysis of UDP-3-O-myristoyl-N-acetylglucosamine to form UDP-3-O-myristoylglucosamine and acetate, the committed step in lipid A biosynthesis. The protein is UDP-3-O-acyl-N-acetylglucosamine deacetylase of Thermosynechococcus vestitus (strain NIES-2133 / IAM M-273 / BP-1).